The sequence spans 513 residues: METNQLFSLDNLITILPECVLIICLLTILMIDVITKKSVWLSNIALLGLLTSTFILLFQLTNNEVGFTAFLGSFQVDGFTIAFRCLLTLSSALCIPLSTEYIRRSGMTQAEFLILLLTATLGGMFLCGANDLVTIFVSLECLSLSSYLLAGQAKKDIRSNEASLKYLLMGGASSSILVYGFSWLYGLSGGELQLSKIVNGISSQDIYLSSAVSLDGKTFGALGLWVAFVCILVGIGFKISAVPFHQWTPDVYEGSPTPVVAFLSVGSKAAGLALATRLLSIVFPAIEDQWHIVLEIVAFLSMVFGNLIAATQTSMKRMLAYSSISQAGYLLIAILVGNSDGYASMITYLLIYTFMNLGAFACTVIFGLRTGTDQIRDYTGLYLKDPWLAFALSICLLSLAGMPPLAGFFGKLYLFWCGWQSHLYLLVYTGLITSVISLYYYLRVVKAMMTKEVKEMSTYVREYVTPSMSIFSSSSIELGLTLCVLASSILGFFMNPLIDVTKQSMLVNNFLVF.

Transmembrane regions (helical) follow at residues 11 to 31 (NLITILPECVLIICLLTILMI), 38 to 58 (SVWLSNIALLGLLTSTFILLF), 78 to 98 (GFTIAFRCLLTLSSALCIPLS), 112 to 132 (FLILLLTATLGGMFLCGANDL), 133 to 153 (VTIFVSLECLSLSSYLLAGQA), 167 to 187 (LLMGGASSSILVYGFSWLYGL), 219 to 239 (FGALGLWVAFVCILVGIGFKI), 256 to 276 (PTPVVAFLSVGSKAAGLALAT), 290 to 310 (WHIVLEIVAFLSMVFGNLIAA), 318 to 338 (MLAYSSISQAGYLLIAILVGN), 348 to 368 (YLLIYTFMNLGAFACTVIFGL), 389 to 409 (AFALSICLLSLAGMPPLAGFF), 422 to 442 (HLYLLVYTGLITSVISLYYYL), and 478 to 498 (LGLTLCVLASSILGFFMNPLI).

The protein belongs to the complex I subunit 2 family. In terms of assembly, NDH is composed of at least 16 different subunits, 5 of which are encoded in the nucleus.

The protein localises to the plastid. Its subcellular location is the chloroplast thylakoid membrane. It carries out the reaction a plastoquinone + NADH + (n+1) H(+)(in) = a plastoquinol + NAD(+) + n H(+)(out). It catalyses the reaction a plastoquinone + NADPH + (n+1) H(+)(in) = a plastoquinol + NADP(+) + n H(+)(out). In terms of biological role, NDH shuttles electrons from NAD(P)H:plastoquinone, via FMN and iron-sulfur (Fe-S) centers, to quinones in the photosynthetic chain and possibly in a chloroplast respiratory chain. The immediate electron acceptor for the enzyme in this species is believed to be plastoquinone. Couples the redox reaction to proton translocation, and thus conserves the redox energy in a proton gradient. In Staurastrum punctulatum (Green alga), this protein is NAD(P)H-quinone oxidoreductase subunit 2, chloroplastic.